Here is a 122-residue protein sequence, read N- to C-terminus: Small ribosomal subunit protein uS13 (122 aa).

Residues 95–122 form a disordered region; that stretch reads GLPVRGQRTHTNARTRKGPAKSIAGKKK.

This sequence belongs to the universal ribosomal protein uS13 family. As to quaternary structure, part of the 30S ribosomal subunit. Forms a loose heterodimer with protein S19. Forms two bridges to the 50S subunit in the 70S ribosome.

Located at the top of the head of the 30S subunit, it contacts several helices of the 16S rRNA. In the 70S ribosome it contacts the 23S rRNA (bridge B1a) and protein L5 of the 50S subunit (bridge B1b), connecting the 2 subunits; these bridges are implicated in subunit movement. Contacts the tRNAs in the A and P-sites. The protein is Small ribosomal subunit protein uS13 of Rhodopseudomonas palustris (strain BisB18).